We begin with the raw amino-acid sequence, 131 residues long: MALSDPLGDLLTRIRNGQHARKDSVVSPASKLRVRVLDVLAREGYIRGYTEAKLGNHDALRIELKYFEGQPAIHHLARVSKPGRRIYSGSRELPRVRNGLGITIVSTPKGVLSDAEARDQNVGGEVLAEVF.

The protein belongs to the universal ribosomal protein uS8 family. Part of the 30S ribosomal subunit. Contacts proteins S5 and S12.

Its function is as follows. One of the primary rRNA binding proteins, it binds directly to 16S rRNA central domain where it helps coordinate assembly of the platform of the 30S subunit. The chain is Small ribosomal subunit protein uS8 from Zymomonas mobilis subsp. mobilis (strain ATCC 31821 / ZM4 / CP4).